The sequence spans 215 residues: MSEKNPIVGLCQKASFLISAAQVDQCPPDEGLEVAFAGRSNAGKSSALNTLTHANLARTSKTPGRTQLLNFFSLDESRRLVDLPGYGYAKVPIPLKQHWQRHLEAYLSSRESLAGVFLMMDIRHPLTDFDRLMLDWAQASQLPIHVLMTKADKLAFGAAKNALLKVRREVQQGWGDVASLQLFSAPKRQGVDEAQMVLAQWLGLLDEDEEPVGEA.

Positions 30 to 204 (EGLEVAFAGR…QMVLAQWLGL (175 aa)) constitute an EngB-type G domain. GTP contacts are provided by residues 38-45 (GRSNAGKS), 64-68 (GRTQL), 82-85 (DLPG), 149-152 (TKAD), and 182-185 (LFSA). The Mg(2+) site is built by Ser-45 and Thr-66.

The protein belongs to the TRAFAC class TrmE-Era-EngA-EngB-Septin-like GTPase superfamily. EngB GTPase family. Requires Mg(2+) as cofactor.

Its function is as follows. Necessary for normal cell division and for the maintenance of normal septation. This Pseudomonas paraeruginosa (strain DSM 24068 / PA7) (Pseudomonas aeruginosa (strain PA7)) protein is Probable GTP-binding protein EngB.